The sequence spans 93 residues: uncharacterized protein (93 aa).

2 helical membrane-spanning segments follow: residues 7 to 27 and 70 to 90; these read LIFL…LGMI and ILSV…AFGI.

The protein resides in the cell membrane. This is an uncharacterized protein from Methanocaldococcus jannaschii (strain ATCC 43067 / DSM 2661 / JAL-1 / JCM 10045 / NBRC 100440) (Methanococcus jannaschii).